Consider the following 492-residue polypeptide: Bifunctional shikimate kinase/3-dehydroquinate synthase (492 aa).

The shikimate kinase stretch occupies residues Met-1–Asp-161. Position 10–15 (Gly-10–Thr-15) interacts with ATP. Residue Ser-14 participates in Mg(2+) binding. 3 residues coordinate substrate: Asp-32, Arg-56, and Gly-78. Arg-114 contacts ATP. Arg-131 provides a ligand contact to substrate. The 3-dehydroquinate synthase stretch occupies residues Glu-162–Asp-492.

In the N-terminal section; belongs to the shikimate kinase family. The protein in the C-terminal section; belongs to the sugar phosphate cyclases superfamily. Dehydroquinate synthase family. Requires Mg(2+) as cofactor. It depends on NAD(+) as a cofactor. A divalent metal cation serves as cofactor.

Its subcellular location is the cytoplasm. The enzyme catalyses 7-phospho-2-dehydro-3-deoxy-D-arabino-heptonate = 3-dehydroquinate + phosphate. It catalyses the reaction shikimate + ATP = 3-phosphoshikimate + ADP + H(+). It participates in metabolic intermediate biosynthesis; chorismate biosynthesis; chorismate from D-erythrose 4-phosphate and phosphoenolpyruvate: step 2/7. It functions in the pathway metabolic intermediate biosynthesis; chorismate biosynthesis; chorismate from D-erythrose 4-phosphate and phosphoenolpyruvate: step 5/7. Functionally, catalyzes the specific phosphorylation of the 3-hydroxyl group of shikimic acid using ATP as a cosubstrate. This is Bifunctional shikimate kinase/3-dehydroquinate synthase (aroKB) from Thermotoga maritima (strain ATCC 43589 / DSM 3109 / JCM 10099 / NBRC 100826 / MSB8).